Reading from the N-terminus, the 1241-residue chain is eIF-2-alpha kinase GCN2 (1241 aa).

Residues Met1–Ser15 are compositionally biased toward basic residues. The interval Met1 to Glu33 is disordered. The 112-residue stretch at Glu37–Ile148 folds into the RWD domain. The tract at residues Pro253–Leu321 is disordered. Composition is skewed to low complexity over residues Asp267–Ser276 and Asn307–Leu321. Residues Phe425–Pro731 form the Protein kinase domain. ATP-binding positions include Leu431–Val439 and Lys454. Asp586 (proton acceptor) is an active-site residue. The segment at Ile819–Arg1219 is histidyl-tRNA synthetase-like.

The protein belongs to the protein kinase superfamily. Ser/Thr protein kinase family. GCN2 subfamily. As to quaternary structure, homodimer; homodimerization is important for kinase activation by uncharged tRNAs. Expressed in roots, leaves, stems, buds, flowers, siliques and seedlings.

Its subcellular location is the cytoplasm. The catalysed reaction is L-seryl-[protein] + ATP = O-phospho-L-seryl-[protein] + ADP + H(+). It catalyses the reaction L-threonyl-[protein] + ATP = O-phospho-L-threonyl-[protein] + ADP + H(+). The kinase activity is stimulated upon binding to uncharged tRNAs. Its function is as follows. Metabolic-stress sensing protein kinase that phosphorylates the alpha subunit of eukaryotic translation initiation factor 2 eIF-2-alpha in response to low amino acid availability. Plays a role as an activator of the general amino acid control pathway required for adapatation to amino acid starvation. Converts phosphorylated eIF-2-alpha either to a competitive inhibitor of translation initiation, leading to a global protein synthesis repression, and thus to a reduced overall utilization of amino acids, or to a translational initiation activation of specific mRNAs, and hence allowing reprogramming of amino acid biosynthetic gene expression to alleviate nutrient depletion. Binds uncharged tRNAs. The chain is eIF-2-alpha kinase GCN2 from Arabidopsis thaliana (Mouse-ear cress).